A 30-amino-acid polypeptide reads, in one-letter code: Photosystem I reaction center subunit XII (30 aa).

Residues V7–Y29 traverse the membrane as a helical segment.

This sequence belongs to the PsaM family.

Its subcellular location is the plastid. The protein localises to the chloroplast thylakoid membrane. The protein is Photosystem I reaction center subunit XII of Trieres chinensis (Marine centric diatom).